Reading from the N-terminus, the 293-residue chain is Pyridoxal 5'-phosphate synthase subunit PdxS (293 aa).

D-ribose 5-phosphate is bound at residue Asp23. Residue Lys80 is the Schiff-base intermediate with D-ribose 5-phosphate of the active site. Gly152 lines the D-ribose 5-phosphate pocket. D-glyceraldehyde 3-phosphate is bound at residue Arg164. D-ribose 5-phosphate-binding positions include Gly213 and 234–235 (GS).

The protein belongs to the PdxS/SNZ family. In the presence of PdxT, forms a dodecamer of heterodimers.

It carries out the reaction aldehydo-D-ribose 5-phosphate + D-glyceraldehyde 3-phosphate + L-glutamine = pyridoxal 5'-phosphate + L-glutamate + phosphate + 3 H2O + H(+). It participates in cofactor biosynthesis; pyridoxal 5'-phosphate biosynthesis. Catalyzes the formation of pyridoxal 5'-phosphate from ribose 5-phosphate (RBP), glyceraldehyde 3-phosphate (G3P) and ammonia. The ammonia is provided by the PdxT subunit. Can also use ribulose 5-phosphate and dihydroxyacetone phosphate as substrates, resulting from enzyme-catalyzed isomerization of RBP and G3P, respectively. The protein is Pyridoxal 5'-phosphate synthase subunit PdxS of Chloroflexus aggregans (strain MD-66 / DSM 9485).